Consider the following 941-residue polypeptide: Cell wall protein IFF9 (941 aa).

The first 20 residues, 1–20, serve as a signal peptide directing secretion; the sequence is MQLFQNILVSIALLTQIVFA. N917 is lipidated: GPI-anchor amidated asparagine. The propeptide at 918–941 is removed in mature form; that stretch reads GSNKESIENIKYLALVVFGLMMFM.

It belongs to the HYR1/IFF family. In terms of processing, the GPI-anchor is attached to the protein in the endoplasmic reticulum and serves to target the protein to the cell surface. There, the glucosamine-inositol phospholipid moiety is cleaved off and the GPI-modified mannoprotein is covalently attached via its lipidless GPI glycan remnant to the 1,6-beta-glucan of the outer cell wall layer.

It is found in the secreted. The protein resides in the cell wall. The protein localises to the membrane. Functionally, GPI-anchored cell wall protein involved in cell wall organization, hyphal growth, as well as in host-fungal interaction and virulence. This chain is Cell wall protein IFF9 (IFF9), found in Candida albicans (strain SC5314 / ATCC MYA-2876) (Yeast).